Consider the following 173-residue polypeptide: Adenine phosphoribosyltransferase (173 aa).

It belongs to the purine/pyrimidine phosphoribosyltransferase family. In terms of assembly, homodimer.

The protein resides in the cytoplasm. It catalyses the reaction AMP + diphosphate = 5-phospho-alpha-D-ribose 1-diphosphate + adenine. It participates in purine metabolism; AMP biosynthesis via salvage pathway; AMP from adenine: step 1/1. Its function is as follows. Catalyzes a salvage reaction resulting in the formation of AMP, that is energically less costly than de novo synthesis. This chain is Adenine phosphoribosyltransferase, found in Thermoanaerobacter sp. (strain X514).